Consider the following 185-residue polypeptide: Elongation factor P (185 aa).

Belongs to the elongation factor P family.

It is found in the cytoplasm. It participates in protein biosynthesis; polypeptide chain elongation. Its function is as follows. Involved in peptide bond synthesis. Stimulates efficient translation and peptide-bond synthesis on native or reconstituted 70S ribosomes in vitro. Probably functions indirectly by altering the affinity of the ribosome for aminoacyl-tRNA, thus increasing their reactivity as acceptors for peptidyl transferase. The sequence is that of Elongation factor P from Endomicrobium trichonymphae.